The sequence spans 1192 residues: DNA topoisomerase 2 (1192 aa).

ATP contacts are provided by residues Asn64, Asn95, and 142–149 (GTNGVGLK). Glu438, Asp539, and Asp541 together coordinate Mg(2+). In terms of domain architecture, Topo IIA-type catalytic spans 707–1174 (IPNFLDGMTR…PGASVWLEEI (468 aa)). Tyr800 functions as the O-(5'-phospho-DNA)-tyrosine intermediate in the catalytic mechanism.

This sequence belongs to the type II topoisomerase family. Mg(2+) serves as cofactor. It depends on Mn(2+) as a cofactor. The cofactor is Ca(2+).

The protein localises to the host cytoplasm. The enzyme catalyses ATP-dependent breakage, passage and rejoining of double-stranded DNA.. In terms of biological role, type II topoisomerase. Processively relaxes supercoiled DNA. Displays DNA-supercoiling activity only when associated with the viral histone-like protein. In African swine fever virus (isolate Pig/Kenya/KEN-50/1950) (ASFV), this protein is DNA topoisomerase 2.